A 526-amino-acid polypeptide reads, in one-letter code: MTLREVSTASDLREFYDVLISGAGPAGMTAALEASAAGARVAVLDENPRPGGQIYRDITRNRPERKSYLGPDYWKGKQLAEVFDRSTIDYAPRATVWSLEGRDETVAKVRNVVGVTVGGSARMIEADAVVLATGAQERPMPVPGWTLQRVMTAGAAQIALKAAGAMPSEPIVLAGCGPLLYLLASQLIDAGVSDLTVLDTAQSTFRMSVLRHMPEFLRSPYVLKGIRLLFKVKCQACVVSGVRSIAITGSERAEGVRFTTAGGEQAIPASSVLLHQGVIPSTNLTNAAGCELRWNDEQRAFEPVTDNEGRSSRQGIYVAGDGSGIAGAQAAEVSGRIAALAALCDLGLVSVTAVAARLKPLHKQARRFLRGRAFLDALYTPRSSFLAPLNPETVVCRCEEITVRKIREAIALRPPGPNQLKTFLRCGMGQCQGRLCAATVTEIMAEERKVSPADVGTYRLRSPVKPVRLAELAQLPHTARALKAVTGRDPVDHDTNETGHISCPDTDIASCGQVQRRRPTSAGIVA.

Residues cysteine 396, cysteine 398, cysteine 431, and cysteine 436 each contribute to the [2Fe-2S] cluster site.

The protein to T-protein and to dimethylglycine dehydrogenase. Heterodimer of a subunit A and a subunit B. The cofactor is [2Fe-2S] cluster.

It participates in opine metabolism; octopine degradation. In terms of biological role, oxidative cleavage of octopine into L-arginine and pyruvate. The polypeptide is Opine oxidase subunit A (ooxA) (Rhizobium meliloti (Ensifer meliloti)).